We begin with the raw amino-acid sequence, 146 residues long: Cysteine protease inhibitor 3 (146 aa).

2 cysteine pairs are disulfide-bonded: Cys-8/Cys-60 and Cys-109/Cys-115.

Belongs to the protease inhibitor I3 (leguminous Kunitz-type inhibitor) family.

The protein resides in the vacuole. In terms of biological role, inhibitor of cysteine proteases. May protect the plant by inhibiting proteases of invading organisms. This Solanum tuberosum (Potato) protein is Cysteine protease inhibitor 3.